Reading from the N-terminus, the 277-residue chain is MKQLYGVIGNPIGHSLSPVMHNDAFEHLNMDAHYHAFLVKEEVLGEAVRGLKALGISGFNVTTPHKVAIMDYLDEIDPLAKQIGAVNTVVHKDGKLIGYNTDGIGFVKALQSISSEPLQEKRILLLGAGGASRAIYFSLADVGVKEIDVANRTVDKAKELITACTATVHSVALSLEEATEEQENYDIIIQTTTIGMHPRVEHTPLQISSLKKGTIVSDIIYNPFETKILCEAKEQGAMIQNGIDMFVYQGALAFEMWTGRTPNIERMKQLVIRKLGG.

Residues 15–17 and threonine 62 contribute to the shikimate site; that span reads SLS. Residue lysine 66 is the Proton acceptor of the active site. Positions 87 and 102 each coordinate shikimate. NADP(+)-binding positions include 127 to 131, 151 to 156, and isoleucine 219; these read GAGGA and NRTVDK. Tyrosine 221 lines the shikimate pocket. Glycine 242 is an NADP(+) binding site.

It belongs to the shikimate dehydrogenase family. Homodimer.

It carries out the reaction shikimate + NADP(+) = 3-dehydroshikimate + NADPH + H(+). Its pathway is metabolic intermediate biosynthesis; chorismate biosynthesis; chorismate from D-erythrose 4-phosphate and phosphoenolpyruvate: step 4/7. Involved in the biosynthesis of the chorismate, which leads to the biosynthesis of aromatic amino acids. Catalyzes the reversible NADPH linked reduction of 3-dehydroshikimate (DHSA) to yield shikimate (SA). This is Shikimate dehydrogenase (NADP(+)) from Bacillus cereus (strain AH187).